The chain runs to 98 residues: NADH-ubiquinone oxidoreductase chain 4L (98 aa).

Helical transmembrane passes span 1–21 (MSLT…GLLM), 30–50 (LLCL…TILI), and 61–81 (IILL…LVAV).

It belongs to the complex I subunit 4L family. Core subunit of respiratory chain NADH dehydrogenase (Complex I) which is composed of 45 different subunits.

Its subcellular location is the mitochondrion inner membrane. It catalyses the reaction a ubiquinone + NADH + 5 H(+)(in) = a ubiquinol + NAD(+) + 4 H(+)(out). Functionally, core subunit of the mitochondrial membrane respiratory chain NADH dehydrogenase (Complex I) which catalyzes electron transfer from NADH through the respiratory chain, using ubiquinone as an electron acceptor. Part of the enzyme membrane arm which is embedded in the lipid bilayer and involved in proton translocation. This Pipistrellus abramus (Japanese pipistrelle) protein is NADH-ubiquinone oxidoreductase chain 4L (MT-ND4L).